The sequence spans 528 residues: Facilitator of iron transport 1 (528 aa).

Positions 1-18 (MKLSSAFVLSAITVAALG) are cleaved as a signal peptide. 3 repeat units span residues 20-98 (SITT…GSGS), 99-168 (SITT…GSGS), and 169-233 (SITT…GSGS). The interval 20–274 (SITTTITATK…ERAPASTVAT (255 aa)) is 4 X approximate tandem repeats. 3 disordered regions span residues 79 to 100 (SIVE…GSSI), 145 to 172 (AAET…SITT), and 214 to 234 (ASPV…SGSS). Polar residues-rich tracts occupy residues 81–93 (VEPS…TSAD) and 145–163 (AAET…TSAD). One copy of the 1-4; truncated repeat lies at 234–274 (SITTTITATKNGHVYTKTVTQDATFVWTGEGERAPASTVAT). 12 consecutive repeat copies span residues 289 to 294 (SIVEAS), 295 to 300 (SAVETS), 301 to 306 (SAAETS), 307 to 312 (SAVETS), 313 to 318 (SAVETS), 319 to 324 (SAVETS), 325 to 330 (SAAETS), 331 to 336 (SAAETS), 337 to 342 (SAVETS), 343 to 348 (SAVEIS), 349 to 353 (SAVET), and 354 to 359 (SAVETS). The 12 X 6 AA approximate tandem repeats, Ser/Thr-rich stretch occupies residues 289–359 (SIVEASSAVE…AVETSAVETS (71 aa)). 2 stretches are compositionally biased toward low complexity: residues 298 to 388 (ETSS…QASS) and 398 to 435 (TSSV…SSAT). The segment at 298 to 471 (ETSSAAETSS…SNNWSSSSSA (174 aa)) is disordered. An N-linked (GlcNAc...) asparagine glycan is attached at N412. Positions 446–457 (YTESSSRDAQSV) are enriched in polar residues. The span at 462 to 471 (SNNWSSSSSA) shows a compositional bias: low complexity. N-linked (GlcNAc...) asparagine glycosylation is present at N464. An ATP-binding site is contributed by 488-495 (GIFTNGKS). N503 is a glycosylation site (N-linked (GlcNAc...) asparagine). G506 carries the GPI-anchor amidated glycine lipid modification. Positions 507-528 (AADSIAAGTGLMGAALAAVIFL) are cleaved as a propeptide — removed in mature form.

In terms of processing, the GPI-anchor is attached to the protein in the endoplasmic reticulum and serves to target the protein to the cell surface. There, the glucosamine-inositol phospholipid moiety is cleaved off and the GPI-modified mannoprotein is covalently attached via its lipidless GPI glycan remnant to the 1,6-beta-glucan of the outer cell wall layer.

The protein localises to the secreted. Its subcellular location is the cell wall. The protein resides in the membrane. In terms of biological role, involved in the uptake of non-siderophore sources of iron and the siderophores ferrioxamine B and ferrichrome. Has a role in the retention of iron in the cell wall and periplasmic space. This Saccharomyces cerevisiae (strain ATCC 204508 / S288c) (Baker's yeast) protein is Facilitator of iron transport 1 (FIT1).